A 363-amino-acid polypeptide reads, in one-letter code: Cinnamyl alcohol dehydrogenase 2 (363 aa).

Cys47 serves as a coordination point for Zn(2+). Thr49 serves as a coordination point for NADP(+). Zn(2+)-binding residues include His69, Glu70, Cys100, Cys103, Cys106, Cys114, and Cys163. Residues Thr167, 188–193, 211–216, Thr251, Gly275, and 298–300 each bind NADP(+); these read GLGGVG, SSSARK, and SFI.

This sequence belongs to the zinc-containing alcohol dehydrogenase family. Homodimer. It depends on Zn(2+) as a cofactor. Expressed in roots behind the root tips in the pericycle region and layer of cortical cells adjacent to the exodermis. Expressed in vascular bundles and lateral veins of leaf sheaths and blades. Expressed in the vicinity of vascular bundles in the first internode below the inflorescence. Highly expressed in the culm.

The enzyme catalyses (E)-cinnamyl alcohol + NADP(+) = (E)-cinnamaldehyde + NADPH + H(+). It catalyses the reaction (E)-coniferol + NADP(+) = (E)-coniferaldehyde + NADPH + H(+). It carries out the reaction (E)-sinapyl alcohol + NADP(+) = (E)-sinapaldehyde + NADPH + H(+). The catalysed reaction is (E)-4-coumaroyl alcohol + NADP(+) = (E)-4-coumaraldehyde + NADPH + H(+). The enzyme catalyses (E)-caffeyl alcohol + NADP(+) = (E)-caffeyl aldehyde + NADPH + H(+). Its pathway is aromatic compound metabolism; phenylpropanoid biosynthesis. Its function is as follows. Involved in lignin biosynthesis. Catalyzes the final step specific for the production of lignin monomers. Catalyzes the NADPH-dependent reduction of coniferaldehyde and sinapaldehyde to their respective alcohols. Plays the major role in monolignol biosynthesis. Functions cooperatively with COMT in the culm internodes for the biosynthesis of monolignols, the lignin precursors. May be involved in lignin biosynthesis in leaves and roots. The sequence is that of Cinnamyl alcohol dehydrogenase 2 from Oryza sativa subsp. japonica (Rice).